We begin with the raw amino-acid sequence, 456 residues long: 26S proteasome non-ATPase regulatory subunit 12 (456 aa).

Position 2 is an N-acetylalanine (alanine 2). Lysine 92 participates in a covalent cross-link: Glycyl lysine isopeptide (Lys-Gly) (interchain with G-Cter in SUMO1); alternate. A Glycyl lysine isopeptide (Lys-Gly) (interchain with G-Cter in SUMO2); alternate cross-link involves residue lysine 92. Residues 242–420 form the PCI domain; that stretch reads SICKHYRAIY…GVINFQRPKD (179 aa). N6-acetyllysine is present on lysine 368.

The protein belongs to the proteasome subunit p55 family. As to quaternary structure, component of the 19S proteasome regulatory particle complex. The 26S proteasome consists of a 20S core particle (CP) and two 19S regulatory subunits (RP). The regulatory particle is made of a lid composed of 9 subunits including PSMD12, a base containing 6 ATPases and few additional components. Interacts with ERCC6.

In terms of biological role, component of the 26S proteasome, a multiprotein complex involved in the ATP-dependent degradation of ubiquitinated proteins. This complex plays a key role in the maintenance of protein homeostasis by removing misfolded or damaged proteins, which could impair cellular functions, and by removing proteins whose functions are no longer required. Therefore, the proteasome participates in numerous cellular processes, including cell cycle progression, apoptosis, or DNA damage repair. In Mus musculus (Mouse), this protein is 26S proteasome non-ATPase regulatory subunit 12 (Psmd12).